The chain runs to 337 residues: Alanine racemase (337 aa).

Catalysis depends on Lys-33, which acts as the Proton acceptor; specific for D-alanine. Lys-33 bears the N6-(pyridoxal phosphate)lysine mark. Residue Arg-118 participates in substrate binding. Residue Tyr-246 is the Proton acceptor; specific for L-alanine of the active site. Position 292 (Met-292) interacts with substrate.

Belongs to the alanine racemase family. The cofactor is pyridoxal 5'-phosphate.

The catalysed reaction is L-alanine = D-alanine. The protein operates within amino-acid biosynthesis; D-alanine biosynthesis; D-alanine from L-alanine: step 1/1. In terms of biological role, catalyzes the interconversion of L-alanine and D-alanine. May also act on other amino acids. The sequence is that of Alanine racemase (alr) from Campylobacter curvus (strain 525.92).